The primary structure comprises 197 residues: Isopentenyl-diphosphate Delta-isomerase (197 aa).

The Mn(2+) site is built by His41 and His48. A Nudix hydrolase domain is found at 46–183; that stretch reads RLHRAFSVFL…AWFMTVLDAA (138 aa). The active site involves Cys83. Position 83 (Cys83) interacts with Mg(2+). Mn(2+) is bound at residue His85. Glu103 contacts Mg(2+). The Mn(2+) site is built by Glu130 and Glu132. Residue Glu132 is part of the active site.

This sequence belongs to the IPP isomerase type 1 family. The cofactor is Mg(2+). Mn(2+) is required as a cofactor.

It is found in the cytoplasm. The enzyme catalyses isopentenyl diphosphate = dimethylallyl diphosphate. Its pathway is isoprenoid biosynthesis; dimethylallyl diphosphate biosynthesis; dimethylallyl diphosphate from isopentenyl diphosphate: step 1/1. Catalyzes the 1,3-allylic rearrangement of the homoallylic substrate isopentenyl (IPP) to its highly electrophilic allylic isomer, dimethylallyl diphosphate (DMAPP). This is Isopentenyl-diphosphate Delta-isomerase from Streptomyces coelicolor (strain ATCC BAA-471 / A3(2) / M145).